We begin with the raw amino-acid sequence, 351 residues long: Leukotriene B4 receptor 1 (351 aa).

The Extracellular portion of the chain corresponds to 1-21 (MAANTTSPAAPSSPGGMSLSL). N-linked (GlcNAc...) asparagine glycosylation occurs at Asn-4. Residues 22 to 44 (LPIVLLSVALAVGLPGNSFVVWS) form a helical membrane-spanning segment. Residues 45-56 (ILKRMQKRTVTA) lie on the Cytoplasmic side of the membrane. Residues 57–77 (LLVLNLALADLAVLLTAPFFL) form a helical membrane-spanning segment. Residues 78 to 93 (HFLARGTWSFREMGCR) lie on the Extracellular side of the membrane. Residues 94–115 (LCHYVCGISMYASVLLITIMSL) form a helical membrane-spanning segment. Residues 116-140 (DRSLAVARPFMSQKVRTKAFARWVL) are Cytoplasmic-facing. Residues 141–161 (AGIWVVSFLLAIPVLVYRTVK) traverse the membrane as a helical segment. The Extracellular segment spans residues 162–179 (WNNRTLICAPNYPNKEHK). A glycan (N-linked (GlcNAc...) asparagine) is linked at Asn-164. The helical transmembrane segment at 180 to 200 (VFHLLFEAITGFLLPFLAVVA) threads the bilayer. The Cytoplasmic segment spans residues 201–222 (SYSDIGRRLQARRFRRSRRTGR). The helical transmembrane segment at 223-243 (LVVLIILAFAAFWLPYHLVNL) threads the bilayer. At 244–268 (VEAGRTVAGWDKNSPAGQRLRLARY) the chain is on the extracellular side. The chain crosses the membrane as a helical span at residues 269–289 (VLIALAFLSSSVNPVLYACAG). Topologically, residues 290–351 (GGLLRSAGVG…TSSTIPESSK (62 aa)) are cytoplasmic. 2 stretches are compositionally biased toward polar residues: residues 311–326 (EVSS…QTPK) and 339–351 (SFMT…ESSK). The segment at 311–351 (EVSSTRRGGTLVQTPKDTPACPEPGPTDSFMTSSTIPESSK) is disordered.

It belongs to the G-protein coupled receptor 1 family. Post-translationally, phosphorylated by GRK6 upon leukotriene B4 binding; which promotes desensitization. Highly expressed on activated leukocytes, including eosinophils.

The protein localises to the cell membrane. Its function is as follows. Receptor for leukotriene B4, a potent chemoattractant involved in inflammation and immune response. The chain is Leukotriene B4 receptor 1 (Ltb4r) from Mus musculus (Mouse).